The chain runs to 194 residues: Probable GTP-binding protein EngB (194 aa).

Positions 22-194 (KIPQIAIVGK…LRIFEEVIEK (173 aa)) constitute an EngB-type G domain. Residues 30–37 (GKSNVGKS), 57–61 (GKTRG), 75–78 (DLPG), 142–145 (TKAD), and 173–175 (FSA) each bind GTP. Mg(2+) is bound by residues serine 37 and threonine 59.

This sequence belongs to the TRAFAC class TrmE-Era-EngA-EngB-Septin-like GTPase superfamily. EngB GTPase family. Requires Mg(2+) as cofactor.

In terms of biological role, necessary for normal cell division and for the maintenance of normal septation. This chain is Probable GTP-binding protein EngB, found in Caldanaerobacter subterraneus subsp. tengcongensis (strain DSM 15242 / JCM 11007 / NBRC 100824 / MB4) (Thermoanaerobacter tengcongensis).